The sequence spans 139 residues: ATP synthase epsilon chain (139 aa).

It belongs to the ATPase epsilon chain family. In terms of assembly, F-type ATPases have 2 components, CF(1) - the catalytic core - and CF(0) - the membrane proton channel. CF(1) has five subunits: alpha(3), beta(3), gamma(1), delta(1), epsilon(1). CF(0) has three main subunits: a, b and c.

It is found in the cell inner membrane. Produces ATP from ADP in the presence of a proton gradient across the membrane. The polypeptide is ATP synthase epsilon chain (Pseudomonas putida (strain ATCC 47054 / DSM 6125 / CFBP 8728 / NCIMB 11950 / KT2440)).